The sequence spans 876 residues: Valine--tRNA ligase (876 aa).

A 'HIGH' region motif is present at residues 44-54 (PNVTGKLHLGH). Positions 520–524 (KMSKS) match the 'KMSKS' region motif. Lys523 is a binding site for ATP. Residues 805 to 876 (LEGLIDMDKE…VKSRIEQLKA (72 aa)) adopt a coiled-coil conformation.

Belongs to the class-I aminoacyl-tRNA synthetase family. ValS type 1 subfamily. As to quaternary structure, monomer.

It is found in the cytoplasm. It catalyses the reaction tRNA(Val) + L-valine + ATP = L-valyl-tRNA(Val) + AMP + diphosphate. In terms of biological role, catalyzes the attachment of valine to tRNA(Val). As ValRS can inadvertently accommodate and process structurally similar amino acids such as threonine, to avoid such errors, it has a 'posttransfer' editing activity that hydrolyzes mischarged Thr-tRNA(Val) in a tRNA-dependent manner. This is Valine--tRNA ligase from Staphylococcus epidermidis (strain ATCC 35984 / DSM 28319 / BCRC 17069 / CCUG 31568 / BM 3577 / RP62A).